The primary structure comprises 315 residues: tRNA pseudouridine synthase B (315 aa).

The active-site Nucleophile is the Asp-54.

The protein belongs to the pseudouridine synthase TruB family. Type 1 subfamily.

It carries out the reaction uridine(55) in tRNA = pseudouridine(55) in tRNA. In terms of biological role, responsible for synthesis of pseudouridine from uracil-55 in the psi GC loop of transfer RNAs. This is tRNA pseudouridine synthase B from Cupriavidus taiwanensis (strain DSM 17343 / BCRC 17206 / CCUG 44338 / CIP 107171 / LMG 19424 / R1) (Ralstonia taiwanensis (strain LMG 19424)).